The sequence spans 138 residues: Ribulose bisphosphate carboxylase small subunit (138 aa).

The protein belongs to the RuBisCO small chain family. In terms of assembly, heterohexadecamer of 8 large and 8 small subunits.

It is found in the plastid. The protein localises to the chloroplast. RuBisCO catalyzes two reactions: the carboxylation of D-ribulose 1,5-bisphosphate, the primary event in carbon dioxide fixation, as well as the oxidative fragmentation of the pentose substrate in the photorespiration process. Both reactions occur simultaneously and in competition at the same active site. Although the small subunit is not catalytic it is essential for maximal activity. This Porphyra purpurea (Red seaweed) protein is Ribulose bisphosphate carboxylase small subunit.